A 610-amino-acid chain; its full sequence is Probable methyltransferase PMT22 (610 aa).

Over 1 to 10 (MIKNIFQSRK) the chain is Cytoplasmic. Residues 11-31 (LSGLCVLSILLVSVTILLLTN) form a helical; Signal-anchor for type II membrane protein membrane-spanning segment. Topologically, residues 32 to 610 (DTIDLFPYLS…LVGLKSSWRP (579 aa)) are lumenal. Low complexity predominate over residues 56–69 (STPISSPTNDSSPP). Residues 56–81 (STPISSPTNDSSPPLESPVNQTRVDD) are disordered. N-linked (GlcNAc...) asparagine glycosylation is found at Asn-64, Asn-75, Asn-100, Asn-400, Asn-469, and Asn-546.

Belongs to the methyltransferase superfamily.

The protein resides in the endoplasmic reticulum membrane. In Arabidopsis thaliana (Mouse-ear cress), this protein is Probable methyltransferase PMT22.